The primary structure comprises 29 residues: Circulin-F (29 aa).

Positions 1–29 (AIPCGESCVWIPCISAAIGCSCKNKVCYR) form a cross-link, cyclopeptide (Ala-Arg). Cystine bridges form between cysteine 4-cysteine 20, cysteine 8-cysteine 22, and cysteine 13-cysteine 27.

Post-translationally, this is a cyclic peptide.

Probably participates in a plant defense mechanism. Inhibits the cytopathic effects of the human immunodeficiency virus. This chain is Circulin-F, found in Chassalia parviflora.